The chain runs to 126 residues: MPTINQLVRKGRASETTKSKSPALQDCPQRRGVCTRVYTTTPKKPNSALRKVAKVRLTNGFEVISYIGGEGHNLQEHSVVLIRGGRVKDLPGVRYHMVRGSLDTQGVKDRKQARSKYGAKRAKAAK.

Residues methionine 1–aspartate 26 form a disordered region. At aspartate 89 the chain carries 3-methylthioaspartic acid. A disordered region spans residues serine 101–lysine 126. Over residues alanine 113–lysine 126 the composition is skewed to basic residues.

This sequence belongs to the universal ribosomal protein uS12 family. Part of the 30S ribosomal subunit. Contacts proteins S8 and S17. May interact with IF1 in the 30S initiation complex.

In terms of biological role, with S4 and S5 plays an important role in translational accuracy. Its function is as follows. Interacts with and stabilizes bases of the 16S rRNA that are involved in tRNA selection in the A site and with the mRNA backbone. Located at the interface of the 30S and 50S subunits, it traverses the body of the 30S subunit contacting proteins on the other side and probably holding the rRNA structure together. The combined cluster of proteins S8, S12 and S17 appears to hold together the shoulder and platform of the 30S subunit. The chain is Small ribosomal subunit protein uS12 from Burkholderia pseudomallei (strain 1106a).